Consider the following 440-residue polypeptide: MKNYLSFGMFALLFALTFGTVNSVQAIAGPEWLLDRPSVNNSQLVVSVAGTVEGTNQDISLKFFEIDLTSRPAHGGKTEQGLSPKSKLFATDSGAMPHKLEKADLLKAIQEQLIANVHSNDDYFEVIDFASDATITDRNGKVYFADKDGSVTLPIQPVQEFLLKGHVRVRPYKEKPVQNQAKSVDVEYTVQFTPLNPDDDFRPALKDTKLLKTLAIGDTITSQELLAQAQSILNKNHPGYTIYERDSSIVTHDNDIFRTILPMDQEFTYHVKNREQAYRINKKSGLNEEINNTDLISEKYYVLKKGEKPYDPFDRSHLKLFTIKYVDVNTNELLKSEQLLTASERNLDFRDLYDPRDKAKLLYNNLDAFGIMDYTLTGKVEDNHDDTNRIITVYMGKRPEGENASYHLAYDKDRYTEEEREVYSYLRYTGTPIPDNPNDK.

An N-terminal signal peptide occupies residues 1–26 (MKNYLSFGMFALLFALTFGTVNSVQA).

In terms of biological role, this protein is not a protease, but it activates plasminogen by complexing with it. As a potential virulence factor, it is thought to prevent the formation of effective fibrin barriers around the site of infection, thereby contributing to the invasiveness of the cells. The polypeptide is Streptokinase G (skg) (Streptococcus sp. (strain 19909)).